The following is a 1070-amino-acid chain: uncharacterized protein (1070 aa).

The region spanning 477 to 523 is the UBA domain; sequence LIDTNQLLLRQLQQIVKLGIFNEKKIKEELKANKFNEQVALQILESE.

This is an uncharacterized protein from Sulfolobus islandicus rod-shaped virus 1 (SIRV-1).